Here is a 692-residue protein sequence, read N- to C-terminus: Elongation factor G (692 aa).

In terms of domain architecture, tr-type G spans 8–282 (EKTRNIGIMA…AIVDFLPAPT (275 aa)). GTP contacts are provided by residues 17-24 (AHIDAGKT), 81-85 (DTPGH), and 135-138 (NKMD).

Belongs to the TRAFAC class translation factor GTPase superfamily. Classic translation factor GTPase family. EF-G/EF-2 subfamily.

It localises to the cytoplasm. In terms of biological role, catalyzes the GTP-dependent ribosomal translocation step during translation elongation. During this step, the ribosome changes from the pre-translocational (PRE) to the post-translocational (POST) state as the newly formed A-site-bound peptidyl-tRNA and P-site-bound deacylated tRNA move to the P and E sites, respectively. Catalyzes the coordinated movement of the two tRNA molecules, the mRNA and conformational changes in the ribosome. The chain is Elongation factor G from Moorella thermoacetica (strain ATCC 39073 / JCM 9320).